Here is a 924-residue protein sequence, read N- to C-terminus: WSC domain-containing protein ARB_07867 (924 aa).

A signal peptide spans 1-24 (MAGILSVVHIIIIFIVRFKSSTDS). The WSC 1 domain maps to 62–160 (TWTYLGCYTD…PGRLNLYQNT (99 aa)). A glycan (N-linked (GlcNAc...) asparagine) is linked at N90. The segment at 166-190 (DTMTTSAPSTETGSPTTTSVPEPTQ) is disordered. The segment covering 169-189 (TTSAPSTETGSPTTTSVPEPT) has biased composition (low complexity). The WSC 2 domain occupies 195–289 (GWQYSGCYQD…PSRLSVYSKG (95 aa)). 7 N-linked (GlcNAc...) asparagine glycosylation sites follow: N290, N333, N387, N455, N552, N758, and N833. The WSC 3 domain occupies 307-404 (GWKYQGCLQD…GNLITYYRWM (98 aa)).

The protein localises to the secreted. This Arthroderma benhamiae (strain ATCC MYA-4681 / CBS 112371) (Trichophyton mentagrophytes) protein is WSC domain-containing protein ARB_07867.